Consider the following 284-residue polypeptide: Nucleotide-binding protein CPS_4546 (284 aa).

An ATP-binding site is contributed by 8-15 (GRSGSGKS). 56–59 (DVRN) lines the GTP pocket.

It belongs to the RapZ-like family.

Its function is as follows. Displays ATPase and GTPase activities. This Colwellia psychrerythraea (strain 34H / ATCC BAA-681) (Vibrio psychroerythus) protein is Nucleotide-binding protein CPS_4546.